Consider the following 247-residue polypeptide: tRNA (guanine-N(1)-)-methyltransferase (247 aa).

Residue glycine 126 coordinates S-adenosyl-L-methionine.

Belongs to the RNA methyltransferase TrmD family. As to quaternary structure, homodimer.

The protein localises to the cytoplasm. It catalyses the reaction guanosine(37) in tRNA + S-adenosyl-L-methionine = N(1)-methylguanosine(37) in tRNA + S-adenosyl-L-homocysteine + H(+). Functionally, specifically methylates guanosine-37 in various tRNAs. In Jannaschia sp. (strain CCS1), this protein is tRNA (guanine-N(1)-)-methyltransferase.